A 195-amino-acid polypeptide reads, in one-letter code: Protein GrpE (195 aa).

It belongs to the GrpE family. As to quaternary structure, homodimer.

The protein resides in the cytoplasm. Participates actively in the response to hyperosmotic and heat shock by preventing the aggregation of stress-denatured proteins, in association with DnaK and GrpE. It is the nucleotide exchange factor for DnaK and may function as a thermosensor. Unfolded proteins bind initially to DnaJ; upon interaction with the DnaJ-bound protein, DnaK hydrolyzes its bound ATP, resulting in the formation of a stable complex. GrpE releases ADP from DnaK; ATP binding to DnaK triggers the release of the substrate protein, thus completing the reaction cycle. Several rounds of ATP-dependent interactions between DnaJ, DnaK and GrpE are required for fully efficient folding. This Francisella tularensis subsp. mediasiatica (strain FSC147) protein is Protein GrpE.